We begin with the raw amino-acid sequence, 315 residues long: DNA-directed RNA polymerase subunit alpha (315 aa).

An alpha N-terminal domain (alpha-NTD) region spans residues 1–228 (MLEIEKPVIQ…EHFKLFMTLT (228 aa)). The alpha C-terminal domain (alpha-CTD) stretch occupies residues 245–315 (KEKALEMTIE…LGLNLRLNDE (71 aa)).

Belongs to the RNA polymerase alpha chain family. Homodimer. The RNAP catalytic core consists of 2 alpha, 1 beta, 1 beta' and 1 omega subunit. When a sigma factor is associated with the core the holoenzyme is formed, which can initiate transcription.

It carries out the reaction RNA(n) + a ribonucleoside 5'-triphosphate = RNA(n+1) + diphosphate. DNA-dependent RNA polymerase catalyzes the transcription of DNA into RNA using the four ribonucleoside triphosphates as substrates. This Clostridium perfringens (strain ATCC 13124 / DSM 756 / JCM 1290 / NCIMB 6125 / NCTC 8237 / Type A) protein is DNA-directed RNA polymerase subunit alpha.